We begin with the raw amino-acid sequence, 442 residues long: Glycolipid 2-alpha-mannosyltransferase (442 aa).

Residues methionine 1 to arginine 11 lie on the Cytoplasmic side of the membrane. The chain crosses the membrane as a helical; Signal-anchor for type II membrane protein span at residues phenylalanine 12 to serine 30. The tract at residues arginine 31–alanine 118 is stem region. Topologically, residues arginine 31–glutamate 442 are lumenal. A disordered region spans residues glutamate 68–glutamate 95. Basic and acidic residues predominate over residues glutamate 85 to glutamate 95. Residues glycine 119–glutamate 442 are catalytic. A glycan (N-linked (GlcNAc...) asparagine) is linked at asparagine 197. Glutamate 329 serves as the catalytic Nucleophile.

This sequence belongs to the glycosyltransferase 15 family. Mn(2+) is required as a cofactor.

It localises to the golgi apparatus membrane. It participates in protein modification; protein glycosylation. In terms of biological role, mannosyltransferase that transfers an alpha-D-mannosyl residue from GDP-mannose into lipid-linked oligosaccharide, forming an alpha-(1-&gt;2)-D-mannosyl-D-mannose linkage. Required for the attachment of the third mannose residue of O-linked saccharides. In Saccharomyces cerevisiae (strain ATCC 204508 / S288c) (Baker's yeast), this protein is Glycolipid 2-alpha-mannosyltransferase (KRE2).